Reading from the N-terminus, the 598-residue chain is Nuclear receptor subfamily 4 group A member 2 (598 aa).

Residues 1-22 are disordered; the sequence is MPCVQAQYGSSPQGASPASQSY. Residues 8–22 show a composition bias toward low complexity; it reads YGSSPQGASPASQSY. A DNA-binding region (nuclear receptor) is located at residues 260–335; that stretch reads EGLCAVCGDN…VGMVKEVVRT (76 aa). NR C4-type zinc fingers lie at residues 263-283 and 299-323; these read CAVCGDNAACQHYGVRTCEGC and CLANKNCPVDKRRRNRCQYCRFQKC. A Bipartite nuclear localization signal (NLS1) motif is present at residues 287–314; sequence FKRTVQKNAKYVCLANKNCPVDKRRRNR. Residues 337–361 form a disordered region; the sequence is SLKGRRGRLPSKPKSPQEPSPPSPP. Residues 338–350 carry the Nuclear localization signal (NLS1) motif; that stretch reads LKGRRGRLPSKPK. Positions 352–361 are enriched in pro residues; the sequence is PQEPSPPSPP. In terms of domain architecture, NR LBD spans 360–595; sequence PPVSLISALV…AIIDKLFLDT (236 aa). A nuclear export sequence (NES1) motif is present at residues 443–452; the sequence is FLELFVLRLA. A nuclear export sequence (NES2) motif is present at residues 568–577; it reads QGLQRIFYLK.

It belongs to the nuclear hormone receptor family. NR4 subfamily. In terms of assembly, interacts with SFPQ, NCOR2, SIN3A and HADC1. The interaction with NCOR2 increases in the absence of PITX3. Interacts with PER2. Expressed in a number of cell lines of T-cell, B-cell and fibroblast origin. Strong expression in brain tissue.

It localises to the cytoplasm. The protein resides in the nucleus. Its function is as follows. Transcriptional regulator which is important for the differentiation and maintenance of meso-diencephalic dopaminergic (mdDA) neurons during development. It is crucial for expression of a set of genes such as SLC6A3, SLC18A2, TH and DRD2 which are essential for development of mdDA neurons. This chain is Nuclear receptor subfamily 4 group A member 2 (NR4A2), found in Homo sapiens (Human).